A 306-amino-acid polypeptide reads, in one-letter code: MRAEKRKKKKKILYTIIALIGIFVLSTGSYAYYLWHKAASTVANIHENINKSKKRDSAVDIDNHDPFSVLLMGVDERDGDKGRADSLIYMTVNPKTKTTEMVSIPRDTYTEIIGKGKMDKINHSYAFGGVQMTVDTVENFLDVPVDYFIKVNMESFKDVVDTLGGITVNSTFAFNYDGYSFGKGEITLNGKEALAYTRMRKEDPNGDFGRQNRQRQVIEGIINKGANISSITKFGDMFKVIENNVKTNLTFDDMWDIQSGYKEARSKVIQHELKGDGTKINGIYYYKADESSLSDITAELKESLNK.

Residues 1–11 are Cytoplasmic-facing; sequence MRAEKRKKKKK. A helical; Signal-anchor for type II membrane protein membrane pass occupies residues 12-32; it reads ILYTIIALIGIFVLSTGSYAY. Residues 33–306 lie on the Extracellular side of the membrane; that stretch reads YLWHKAASTV…TAELKESLNK (274 aa).

Belongs to the LytR/CpsA/Psr (LCP) family.

The protein resides in the cell membrane. It participates in cell wall biogenesis. Functionally, may catalyze the final step in cell wall teichoic acid biosynthesis, the transfer of the anionic cell wall polymers (APs) from their lipid-linked precursor to the cell wall peptidoglycan (PG). This Bacillus licheniformis (strain ATCC 14580 / DSM 13 / JCM 2505 / CCUG 7422 / NBRC 12200 / NCIMB 9375 / NCTC 10341 / NRRL NRS-1264 / Gibson 46) protein is Polyisoprenyl-teichoic acid--peptidoglycan teichoic acid transferase TagU.